The primary structure comprises 355 residues: D-alanine--D-alanine ligase (355 aa).

In terms of domain architecture, ATP-grasp spans 143–350 (KTIFSNLKIP…IEQLVAKLVD (208 aa)). 178–233 (LKKLNFPFFVKPSNSGSSLGISKVINESEILQSLEKAQKIDSRILVEEGLEVREIE) lines the ATP pocket. Positions 303, 317, and 319 each coordinate Mg(2+).

It belongs to the D-alanine--D-alanine ligase family. Mg(2+) serves as cofactor. The cofactor is Mn(2+).

The protein localises to the cytoplasm. The enzyme catalyses 2 D-alanine + ATP = D-alanyl-D-alanine + ADP + phosphate + H(+). Its pathway is cell wall biogenesis; peptidoglycan biosynthesis. Cell wall formation. This is D-alanine--D-alanine ligase from Prochlorococcus marinus (strain MIT 9215).